The primary structure comprises 323 residues: Aldo-keto reductase family 1 member C4 (323 aa).

NADP(+) is bound by residues 20–24 and Asp50; that span reads GFGTY. The Proton donor role is filled by Tyr55. Substrate is bound at residue His117. NADP(+) contacts are provided by residues 166 to 167, Gln190, 216 to 221, and 270 to 280; these read SN, HSALGT, and KSYNEQRIREN.

This sequence belongs to the aldo/keto reductase family. As to quaternary structure, monomer.

Its subcellular location is the cytoplasm. It localises to the cytosol. It carries out the reaction chlordecone alcohol + NADP(+) = chlordecone + NADPH + H(+). The enzyme catalyses a 3alpha-hydroxysteroid + NADP(+) = a 3-oxosteroid + NADPH + H(+). The catalysed reaction is a 3alpha-hydroxysteroid + NAD(+) = a 3-oxosteroid + NADH + H(+). It catalyses the reaction 5alpha-androstane-3alpha,17beta-diol + NADP(+) = 17beta-hydroxy-5alpha-androstan-3-one + NADPH + H(+). It carries out the reaction 5alpha-androstane-3beta,17beta-diol + NADP(+) = 17beta-hydroxy-5alpha-androstan-3-one + NADPH + H(+). The enzyme catalyses 5alpha-androstane-3alpha,17beta-diol + NAD(+) = 17beta-hydroxy-5alpha-androstan-3-one + NADH + H(+). The catalysed reaction is 17beta-estradiol + NADP(+) = estrone + NADPH + H(+). It catalyses the reaction 17beta-estradiol + NAD(+) = estrone + NADH + H(+). It carries out the reaction (20S)-hydroxypregn-4-en-3-one + NADP(+) = progesterone + NADPH + H(+). The enzyme catalyses (20S)-hydroxypregn-4-en-3-one + NAD(+) = progesterone + NADH + H(+). The catalysed reaction is androsterone + NADP(+) = 5alpha-androstan-3,17-dione + NADPH + H(+). It catalyses the reaction testosterone + NADP(+) = androst-4-ene-3,17-dione + NADPH + H(+). It carries out the reaction testosterone + NAD(+) = androst-4-ene-3,17-dione + NADH + H(+). The enzyme catalyses 3alpha-hydroxy-5alpha-androstane 17-O-(beta-D-glucuronate) + NADP(+) = 5alpha-dihydrotestosterone 17-O-(beta-D-glucuronate) + NADPH + H(+). The catalysed reaction is (3beta,5alpha,17beta)-3-hydroxy-androstan-17-yl sulfate + NADP(+) = 5alpha-dihydrotestosterone sulfate + NADPH + H(+). It catalyses the reaction 5alpha-androstane-3alpha,17beta-diol + NAD(+) = androsterone + NADH + H(+). It functions in the pathway steroid metabolism. Cytosolic aldo-keto reductase that catalyzes the NADH and NADPH-dependent reduction of ketosteroids to hydroxysteroids. Liver specific enzyme that acts as an NAD(P)(H)-dependent 3-, 17- and 20-ketosteroid reductase on the steroid nucleus and side chain. Displays the ability to catalyze both oxidation and reduction in vitro, but most probably acts as a reductase in vivo since the oxidase activity measured in vitro is inhibited by physiological concentration of NADPH. Acts preferentially as a 3-alpha-hydroxysteroid dehydrogenase (HSD) with a subsidiary 3-beta-HSD activity. Catalyzes efficiently the transformation of the potent androgen 5-alpha-dihydrotestosterone (5alpha-DHT or 17beta-hydroxy-5alpha-androstan-3-one) into the less active form, 5-alpha-androstan-3-alpha,17-beta-diol (3-alpha-diol). Catalyzes the reduction of estrone into 17beta-estradiol but with low efficiency. Metabolizes a broad spectrum of natural and synthetic therapeutic steroid and plays an important role in metabolism of androgens, estrogens, progestereone and conjugated steroids. Catalyzes the biotransformation of the pesticide chlordecone (kepone) to its corresponding alcohol leading to increased biliary excretion of the pesticide and concomitant reduction of its neurotoxicity since bile is the major excretory route. The chain is Aldo-keto reductase family 1 member C4 (AKR1C4) from Macaca fascicularis (Crab-eating macaque).